A 40-amino-acid polypeptide reads, in one-letter code: Ribosome-inactivating protein saporin-1 (40 aa).

It belongs to the ribosome-inactivating protein family. Type 1 RIP subfamily.

It carries out the reaction Endohydrolysis of the N-glycosidic bond at one specific adenosine on the 28S rRNA.. Ribosome-inactivating protein of type 1, inhibits protein synthesis in animal cells. This Saponaria officinalis (Common soapwort) protein is Ribosome-inactivating protein saporin-1 (SAP1).